Here is a 90-residue protein sequence, read N- to C-terminus: Small ribosomal subunit protein uS17 (90 aa).

It belongs to the universal ribosomal protein uS17 family. As to quaternary structure, part of the 30S ribosomal subunit.

Functionally, one of the primary rRNA binding proteins, it binds specifically to the 5'-end of 16S ribosomal RNA. This Methylobacillus flagellatus (strain ATCC 51484 / DSM 6875 / VKM B-1610 / KT) protein is Small ribosomal subunit protein uS17.